The chain runs to 430 residues: Lipoyl synthase, mitochondrial (430 aa).

A mitochondrion-targeting transit peptide spans 1–37 (MATSAGKLRTLYSAHSSLSSLPPSARPTLQLATLRSY). The segment covering 39 to 55 (TTTPHDSPIGNTSNTPP) has biased composition (polar residues). Residues 39-58 (TTTPHDSPIGNTSNTPPTVK) form a disordered region. Positions 141, 146, 152, 172, 176, 179, and 387 each coordinate [4Fe-4S] cluster. Residues 155–376 (GSSKSAATAT…KERALEMGFL (222 aa)) enclose the Radical SAM core domain.

Belongs to the radical SAM superfamily. Lipoyl synthase family. [4Fe-4S] cluster is required as a cofactor.

The protein localises to the mitochondrion. The catalysed reaction is [[Fe-S] cluster scaffold protein carrying a second [4Fe-4S](2+) cluster] + N(6)-octanoyl-L-lysyl-[protein] + 2 oxidized [2Fe-2S]-[ferredoxin] + 2 S-adenosyl-L-methionine + 4 H(+) = [[Fe-S] cluster scaffold protein] + N(6)-[(R)-dihydrolipoyl]-L-lysyl-[protein] + 4 Fe(3+) + 2 hydrogen sulfide + 2 5'-deoxyadenosine + 2 L-methionine + 2 reduced [2Fe-2S]-[ferredoxin]. It functions in the pathway protein modification; protein lipoylation via endogenous pathway; protein N(6)-(lipoyl)lysine from octanoyl-[acyl-carrier-protein]: step 2/2. Functionally, catalyzes the radical-mediated insertion of two sulfur atoms into the C-6 and C-8 positions of the octanoyl moiety bound to the lipoyl domains of lipoate-dependent enzymes, thereby converting the octanoylated domains into lipoylated derivatives. The polypeptide is Lipoyl synthase, mitochondrial (Ajellomyces capsulatus (strain G186AR / H82 / ATCC MYA-2454 / RMSCC 2432) (Darling's disease fungus)).